A 296-amino-acid chain; its full sequence is Probable ribosomal RNA small subunit methyltransferase A (296 aa).

Polar residues predominate over residues 1–16 (MTDATSGSDPDSTTPV). A disordered region spans residues 1–25 (MTDATSGSDPDSTTPVDLTGEDFRD). S-adenosyl-L-methionine-binding residues include H44, L46, G72, E93, D121, and N136.

The protein belongs to the class I-like SAM-binding methyltransferase superfamily. rRNA adenine N(6)-methyltransferase family. RsmA subfamily.

Its subcellular location is the cytoplasm. Specifically dimethylates two adjacent adenosines in the loop of a conserved hairpin near the 3'-end of 16S rRNA in the 30S particle. May play a critical role in biogenesis of 30S subunits. The sequence is that of Probable ribosomal RNA small subunit methyltransferase A from Haloquadratum walsbyi (strain DSM 16790 / HBSQ001).